The following is a 136-amino-acid chain: uncharacterized protein (136 aa).

The first 19 residues, 1–19 (MMTAAKRLGLYSALRACSA), serve as a signal peptide directing secretion. A helical membrane pass occupies residues 75–97 (FWFSHTCLVFGSNTILFASLNSF).

The protein resides in the membrane. This is an uncharacterized protein from Saccharomyces cerevisiae (strain ATCC 204508 / S288c) (Baker's yeast).